Consider the following 1576-residue polypeptide: Calmodulin-regulated spectrin-associated protein 1 (1576 aa).

Residues 217–332 form the Calponin-homology (CH) domain; that stretch reads ESPSHPKVRY…FIAELFWWFE (116 aa). Disordered stretches follow at residues 415–447, 549–572, 595–653, and 811–852; these read HPLL…TRAD, DLEL…RRPA, KEKH…LESD, and YETK…QNRD. The segment covering 428-439 has biased composition (basic and acidic residues); it reads VKPEESLNHRDQ. A compositionally biased stretch (low complexity) spans 554 to 566; the sequence is SVSSRASSQMSTS. Residues 595-611 are compositionally biased toward basic and acidic residues; it reads KEKHMVPKSEEYGEGKQ. Composition is skewed to polar residues over residues 613 to 626 and 642 to 651; these read GFSS…NQSF and RTFTPLSSLE. The segment covering 813–824 has biased composition (low complexity); that stretch reads TKSSTSSSQKTT. Residues 840–852 show a composition bias toward basic and acidic residues; sequence QRREQSPGRQNRD. Coiled coils occupy residues 857 to 889 and 992 to 1022; these read LASE…SARQ and DVNE…QQQE. Disordered stretches follow at residues 1108-1149, 1178-1236, and 1274-1422; these read LKSV…RLHN, SSRV…ISDD, and RLRK…DWEN. Low complexity predominate over residues 1116–1131; it reads SPSVPTEESPVEVVPE. Residues 1178–1189 show a composition bias toward polar residues; that stretch reads SSRVAGVSTSES. Composition is skewed to basic and acidic residues over residues 1195–1204, 1225–1236, and 1274–1323; these read VPVDERHKSS, HPEKTKDIISDD, and RLRK…KQEQ. A coiled-coil region spans residues 1254 to 1315; sequence ELAKKRAAFL…KARRELIKQE (62 aa). The span at 1333-1346 shows a compositional bias: basic residues; the sequence is PKPKPKSKKTRPKS. A compositionally biased stretch (polar residues) spans 1354–1366; it reads SDSGTKYSSTPDN. Residues 1367–1382 are compositionally biased toward low complexity; it reads LSSAQSGSSLSLASGA. The span at 1383–1394 shows a compositional bias: polar residues; the sequence is TTEAESVHSGGT. In terms of domain architecture, CKK spans 1437–1571; sequence GPKLYKEPSS…QAKRPALPKK (135 aa).

This sequence belongs to the CAMSAP1 family.

The protein localises to the cytoplasm. It localises to the cytoskeleton. Functionally, key microtubule-organizing protein that specifically binds the minus-end of non-centrosomal microtubules and regulates their dynamics and organization. Specifically recognizes growing microtubule minus-ends and stabilizes microtubules. Acts on free microtubule minus-ends that are not capped by microtubule-nucleating proteins or other factors and protects microtubule minus-ends from depolymerization. In contrast to camsap2 and camsap3, tracks along the growing tips of minus-end microtubules without significantly affecting the polymerization rate: binds at the very tip of the microtubules minus-end and acts as a minus-end tracking protein (-TIP) that dissociates from microtubules after allowing tubulin incorporation. Through interaction with spectrin may regulate neurite outgrowth. The protein is Calmodulin-regulated spectrin-associated protein 1 (camsap1) of Xenopus laevis (African clawed frog).